The following is a 501-amino-acid chain: ATP synthase subunit alpha (501 aa).

An ATP-binding site is contributed by 169–176 (GDRQTGKT).

Belongs to the ATPase alpha/beta chains family. As to quaternary structure, F-type ATPases have 2 components, CF(1) - the catalytic core - and CF(0) - the membrane proton channel. CF(1) has five subunits: alpha(3), beta(3), gamma(1), delta(1), epsilon(1). CF(0) has three main subunits: a(1), b(2) and c(9-12). The alpha and beta chains form an alternating ring which encloses part of the gamma chain. CF(1) is attached to CF(0) by a central stalk formed by the gamma and epsilon chains, while a peripheral stalk is formed by the delta and b chains.

Its subcellular location is the cell inner membrane. The enzyme catalyses ATP + H2O + 4 H(+)(in) = ADP + phosphate + 5 H(+)(out). Produces ATP from ADP in the presence of a proton gradient across the membrane. The alpha chain is a regulatory subunit. In Campylobacter lari (strain RM2100 / D67 / ATCC BAA-1060), this protein is ATP synthase subunit alpha.